Here is a 241-residue protein sequence, read N- to C-terminus: Uridylate kinase (241 aa).

12-15 serves as a coordination point for ATP; it reads KLSG. Residues 20–25 form an involved in allosteric activation by GTP region; it reads GDKGQG. G54 serves as a coordination point for UMP. ATP-binding residues include G55 and R59. UMP-binding positions include D74 and 135 to 142; that span reads TGSPYFST. N163, Y169, and D172 together coordinate ATP.

This sequence belongs to the UMP kinase family. As to quaternary structure, homohexamer.

The protein localises to the cytoplasm. It carries out the reaction UMP + ATP = UDP + ADP. The protein operates within pyrimidine metabolism; CTP biosynthesis via de novo pathway; UDP from UMP (UMPK route): step 1/1. Its activity is regulated as follows. Allosterically activated by GTP. Inhibited by UTP. In terms of biological role, catalyzes the reversible phosphorylation of UMP to UDP. This chain is Uridylate kinase, found in Leuconostoc mesenteroides subsp. mesenteroides (strain ATCC 8293 / DSM 20343 / BCRC 11652 / CCM 1803 / JCM 6124 / NCDO 523 / NBRC 100496 / NCIMB 8023 / NCTC 12954 / NRRL B-1118 / 37Y).